Consider the following 335-residue polypeptide: Urokinase plasminogen activator surface receptor (335 aa).

The N-terminal stretch at 1-22 is a signal peptide; the sequence is MGHPLLLPLLLLLHTCVPASWG. UPAR/Ly6 domains lie at 23–114, 115–213, and 214–305; these read LRCM…RSRY, LECI…PQNG, and HQCY…YRKG. Intrachain disulfides connect cysteine 25/cysteine 46, cysteine 28/cysteine 34, and cysteine 39/cysteine 67. Asparagine 74 is a glycosylation site (N-linked (GlcNAc...) asparagine). Intrachain disulfides connect cysteine 93-cysteine 98, cysteine 117-cysteine 144, cysteine 120-cysteine 127, cysteine 137-cysteine 169, cysteine 175-cysteine 192, cysteine 193-cysteine 198, cysteine 216-cysteine 244, cysteine 219-cysteine 227, cysteine 237-cysteine 263, cysteine 269-cysteine 287, and cysteine 288-cysteine 293. 5 N-linked (GlcNAc...) asparagine glycosylation sites follow: asparagine 184, asparagine 194, asparagine 222, asparagine 255, and asparagine 284. Glycine 305 is lipidated: GPI-anchor amidated glycine. The propeptide at 306–335 is removed in mature form; the sequence is AAPQPGPAHLSLTITLLMTARLWGGTLLWT.

As to quaternary structure, monomer. Interacts (via the UPAR/Ly6 domains) with SRPX2. Interacts with MRC2. Interacts with FAP (seprase); the interaction occurs at the cell surface of invadopodia membrane. Interacts with SORL1 (via N-terminal ectodomain); this interaction decreases PLAUR internalization. The ternary complex composed of PLAUR-PLAU-SERPINE1 also interacts with SORL1.

The protein resides in the cell membrane. It localises to the cell projection. It is found in the invadopodium membrane. Functionally, acts as a receptor for urokinase plasminogen activator. Plays a role in localizing and promoting plasmin formation. Mediates the proteolysis-independent signal transduction activation effects of U-PA. It is subject to negative-feedback regulation by U-PA which cleaves it into an inactive form. In Macaca fascicularis (Crab-eating macaque), this protein is Urokinase plasminogen activator surface receptor (PLAUR).